A 232-amino-acid polypeptide reads, in one-letter code: Transcriptional regulatory protein CpxR (232 aa).

Positions 3–115 constitute a Response regulatory domain; it reads KILLVDDDRE…ELVARIRAIL (113 aa). Aspartate 51 bears the 4-aspartylphosphate mark. The ompR/PhoB-type DNA-binding region spans 131-230; it reads SPTLEVDALV…LRGRGYLMVS (100 aa).

Post-translationally, phosphorylated by CpxA.

It localises to the cytoplasm. In terms of biological role, member of the two-component regulatory system CpxA/CpxR. This system combats a variety of extracytoplasmic protein-mediated toxicities. It performs this function by increasing the synthesis of the periplasmic protease, DegP as well as that of CpxP protein. This Escherichia coli O157:H7 protein is Transcriptional regulatory protein CpxR (cpxR).